Reading from the N-terminus, the 145-residue chain is D-aminoacyl-tRNA deacylase (145 aa).

Positions glycine 137–proline 138 match the Gly-cisPro motif, important for rejection of L-amino acids motif.

The protein belongs to the DTD family. Homodimer.

Its subcellular location is the cytoplasm. It carries out the reaction glycyl-tRNA(Ala) + H2O = tRNA(Ala) + glycine + H(+). The catalysed reaction is a D-aminoacyl-tRNA + H2O = a tRNA + a D-alpha-amino acid + H(+). An aminoacyl-tRNA editing enzyme that deacylates mischarged D-aminoacyl-tRNAs. Also deacylates mischarged glycyl-tRNA(Ala), protecting cells against glycine mischarging by AlaRS. Acts via tRNA-based rather than protein-based catalysis; rejects L-amino acids rather than detecting D-amino acids in the active site. By recycling D-aminoacyl-tRNA to D-amino acids and free tRNA molecules, this enzyme counteracts the toxicity associated with the formation of D-aminoacyl-tRNA entities in vivo and helps enforce protein L-homochirality. The polypeptide is D-aminoacyl-tRNA deacylase (Pseudomonas putida (strain ATCC 700007 / DSM 6899 / JCM 31910 / BCRC 17059 / LMG 24140 / F1)).